The sequence spans 40 residues: Cytochrome b6-f complex subunit 5 (40 aa).

A helical transmembrane segment spans residues 5–25 (ILLGMVLGFVPVTIAGLLVAA).

Belongs to the PetG family. As to quaternary structure, the 4 large subunits of the cytochrome b6-f complex are cytochrome b6, subunit IV (17 kDa polypeptide, PetD), cytochrome f and the Rieske protein, while the 4 small subunits are PetG, PetL, PetM and PetN. The complex functions as a dimer.

The protein localises to the cell inner membrane. Functionally, component of the cytochrome b6-f complex, which mediates electron transfer between photosystem II (PSII) and photosystem I (PSI), cyclic electron flow around PSI, and state transitions. PetG is required for either the stability or assembly of the cytochrome b6-f complex. This Gloeobacter violaceus (strain ATCC 29082 / PCC 7421) protein is Cytochrome b6-f complex subunit 5.